The primary structure comprises 642 residues: RNA polymerase sigma factor RpoD (642 aa).

The tract at residues 199 to 228 is disordered; sequence HLETTAPEKPSNDNSDENEDDEESEEDADE. Acidic residues predominate over residues 212–228; that stretch reads NSDENEDDEESEEDADE. A sigma-70 factor domain-2 region spans residues 403–473; sequence MIQANLRLVI…TRSIADQART (71 aa). Residues 427–430 carry the Interaction with polymerase core subunit RpoC motif; the sequence is DLIQ. Residues 482–558 are sigma-70 factor domain-3; sequence ETINKMNRIS…DANNVAPADA (77 aa). Residues 571–624 form a sigma-70 factor domain-4 region; sequence ILESLTPREAKVLRMRFGIDMNTDHTLEEVGRQFDVTRERIRQIEAKALRKLRH. Positions 597–616 form a DNA-binding region, H-T-H motif; it reads LEEVGRQFDVTRERIRQIEA.

Belongs to the sigma-70 factor family. RpoD/SigA subfamily. Interacts transiently with the RNA polymerase catalytic core.

The protein resides in the cytoplasm. Sigma factors are initiation factors that promote the attachment of RNA polymerase to specific initiation sites and are then released. This sigma factor is the primary sigma factor during exponential growth. This Neisseria gonorrhoeae protein is RNA polymerase sigma factor RpoD.